The following is a 201-amino-acid chain: FMN-dependent NADH:quinone oxidoreductase (201 aa).

FMN is bound by residues serine 9 and 16–18; that span reads SYS.

It belongs to the azoreductase type 1 family. Homodimer. Requires FMN as cofactor.

The enzyme catalyses 2 a quinone + NADH + H(+) = 2 a 1,4-benzosemiquinone + NAD(+). It catalyses the reaction N,N-dimethyl-1,4-phenylenediamine + anthranilate + 2 NAD(+) = 2-(4-dimethylaminophenyl)diazenylbenzoate + 2 NADH + 2 H(+). Functionally, quinone reductase that provides resistance to thiol-specific stress caused by electrophilic quinones. Its function is as follows. Also exhibits azoreductase activity. Catalyzes the reductive cleavage of the azo bond in aromatic azo compounds to the corresponding amines. In Mesomycoplasma hyopneumoniae (strain 7448) (Mycoplasma hyopneumoniae), this protein is FMN-dependent NADH:quinone oxidoreductase.